A 510-amino-acid chain; its full sequence is Histidine ammonia-lyase (510 aa).

Residues 145-147 constitute a cross-link (5-imidazolinone (Ala-Gly)); that stretch reads ASG. Ser146 bears the 2,3-didehydroalanine (Ser) mark.

This sequence belongs to the PAL/histidase family. Post-translationally, contains an active site 4-methylidene-imidazol-5-one (MIO), which is formed autocatalytically by cyclization and dehydration of residues Ala-Ser-Gly.

It localises to the cytoplasm. It catalyses the reaction L-histidine = trans-urocanate + NH4(+). The protein operates within amino-acid degradation; L-histidine degradation into L-glutamate; N-formimidoyl-L-glutamate from L-histidine: step 1/3. The polypeptide is Histidine ammonia-lyase (Stigmatella aurantiaca).